A 917-amino-acid polypeptide reads, in one-letter code: Translation initiation factor IF-2 (917 aa).

Residues 241–312 (EEAKKGTLHK…GGWRSGGGRK (72 aa)) form a disordered region. Basic and acidic residues predominate over residues 252 to 262 (AKAEGAEDKKK). Residues 274–283 (SSETSSTWQE) show a composition bias toward polar residues. Residues 298–308 (TSGGVGGWRSG) are compositionally biased toward gly residues. One can recognise a tr-type G domain in the interval 415–582 (PRPPVVTVMG…NVLLQAEILE (168 aa)). Residues 424-431 (GHVDHGKT) are G1. 424–431 (GHVDHGKT) contributes to the GTP binding site. A G2 region spans residues 449 to 453 (GITQH). Positions 470–473 (DTPG) are G3. Residues 470 to 474 (DTPGH) and 524 to 527 (NKID) each bind GTP. The G4 stretch occupies residues 524-527 (NKID). Positions 560-562 (SAK) are G5.

This sequence belongs to the TRAFAC class translation factor GTPase superfamily. Classic translation factor GTPase family. IF-2 subfamily.

The protein resides in the cytoplasm. Its function is as follows. One of the essential components for the initiation of protein synthesis. Protects formylmethionyl-tRNA from spontaneous hydrolysis and promotes its binding to the 30S ribosomal subunits. Also involved in the hydrolysis of GTP during the formation of the 70S ribosomal complex. This is Translation initiation factor IF-2 from Polynucleobacter necessarius subsp. necessarius (strain STIR1).